The primary structure comprises 341 residues: tRNA N6-adenosine threonylcarbamoyltransferase (341 aa).

Residues histidine 111 and histidine 115 each contribute to the Fe cation site. Substrate contacts are provided by residues 134-138 (LVSGG), aspartate 167, glycine 180, and asparagine 276. A Fe cation-binding site is contributed by aspartate 304.

The protein belongs to the KAE1 / TsaD family. Fe(2+) serves as cofactor.

It is found in the cytoplasm. It catalyses the reaction L-threonylcarbamoyladenylate + adenosine(37) in tRNA = N(6)-L-threonylcarbamoyladenosine(37) in tRNA + AMP + H(+). Its function is as follows. Required for the formation of a threonylcarbamoyl group on adenosine at position 37 (t(6)A37) in tRNAs that read codons beginning with adenine. Is involved in the transfer of the threonylcarbamoyl moiety of threonylcarbamoyl-AMP (TC-AMP) to the N6 group of A37, together with TsaE and TsaB. TsaD likely plays a direct catalytic role in this reaction. This chain is tRNA N6-adenosine threonylcarbamoyltransferase, found in Pseudomonas paraeruginosa (strain DSM 24068 / PA7) (Pseudomonas aeruginosa (strain PA7)).